Reading from the N-terminus, the 952-residue chain is uncharacterized protein (952 aa).

The CheB-type methylesterase domain maps to 1-141; it reads MASLLARHTK…PWIADYLIRR (141 aa). The CheR-type methyltransferase domain maps to 168 to 440; sequence VGQFDGLEPA…SARHRIWQAL (273 aa). Polar residues predominate over residues 923 to 935; it reads HNQTEASPETSSG. Residues 923–952 are disordered; the sequence is HNQTEASPETSSGGLPGSDGTGADGGAPRA. Over residues 936 to 952 the composition is skewed to gly residues; the sequence is GLPGSDGTGADGGAPRA.

This is an uncharacterized protein from Rhodobacter capsulatus (Rhodopseudomonas capsulata).